The sequence spans 240 residues: 1-(5-phosphoribosyl)-5-[(5-phosphoribosylamino)methylideneamino] imidazole-4-carboxamide isomerase (240 aa).

Asp-9 acts as the Proton acceptor in catalysis. Catalysis depends on Asp-131, which acts as the Proton donor.

The protein belongs to the HisA/HisF family.

It is found in the cytoplasm. It catalyses the reaction 1-(5-phospho-beta-D-ribosyl)-5-[(5-phospho-beta-D-ribosylamino)methylideneamino]imidazole-4-carboxamide = 5-[(5-phospho-1-deoxy-D-ribulos-1-ylimino)methylamino]-1-(5-phospho-beta-D-ribosyl)imidazole-4-carboxamide. The protein operates within amino-acid biosynthesis; L-histidine biosynthesis; L-histidine from 5-phospho-alpha-D-ribose 1-diphosphate: step 4/9. The chain is 1-(5-phosphoribosyl)-5-[(5-phosphoribosylamino)methylideneamino] imidazole-4-carboxamide isomerase from Cytophaga hutchinsonii (strain ATCC 33406 / DSM 1761 / CIP 103989 / NBRC 15051 / NCIMB 9469 / D465).